The primary structure comprises 205 residues: Small ribosomal subunit protein uS4 (205 aa).

The tract at residues 18-46 (NIWGRPKSPVNRREYGPGQHGQRRKGKLS) is disordered. One can recognise an S4 RNA-binding domain in the interval 94–154 (RRLDTVVFRA…EASKQLAVVL (61 aa)).

Belongs to the universal ribosomal protein uS4 family. As to quaternary structure, part of the 30S ribosomal subunit. Contacts protein S5. The interaction surface between S4 and S5 is involved in control of translational fidelity.

Functionally, one of the primary rRNA binding proteins, it binds directly to 16S rRNA where it nucleates assembly of the body of the 30S subunit. In terms of biological role, with S5 and S12 plays an important role in translational accuracy. The protein is Small ribosomal subunit protein uS4 of Bradyrhizobium sp. (strain ORS 278).